The sequence spans 283 residues: Shikimate dehydrogenase (NADP(+)) (283 aa).

Shikimate is bound by residues 19 to 21 (SRS) and threonine 66. Lysine 70 (proton acceptor) is an active-site residue. Glutamate 82 contacts NADP(+). Positions 91 and 107 each coordinate shikimate. Residues 133 to 137 (GAGGA) and isoleucine 226 each bind NADP(+). Residue tyrosine 228 coordinates shikimate. Glycine 249 is a binding site for NADP(+).

The protein belongs to the shikimate dehydrogenase family. In terms of assembly, homodimer.

It catalyses the reaction shikimate + NADP(+) = 3-dehydroshikimate + NADPH + H(+). The protein operates within metabolic intermediate biosynthesis; chorismate biosynthesis; chorismate from D-erythrose 4-phosphate and phosphoenolpyruvate: step 4/7. In terms of biological role, involved in the biosynthesis of the chorismate, which leads to the biosynthesis of aromatic amino acids. Catalyzes the reversible NADPH linked reduction of 3-dehydroshikimate (DHSA) to yield shikimate (SA). The protein is Shikimate dehydrogenase (NADP(+)) of Rhodospirillum rubrum (strain ATCC 11170 / ATH 1.1.1 / DSM 467 / LMG 4362 / NCIMB 8255 / S1).